A 299-amino-acid chain; its full sequence is Protein translocase subunit SecF (299 aa).

Helical transmembrane passes span 14–34 (VLIV…FYHG), 142–162 (IFLV…RFKL), 166–186 (IASI…LGVF), 193–213 (YIIV…IIIF), 245–265 (LTSV…EGSI), and 270–290 (LVFM…ASPI).

The protein belongs to the SecD/SecF family. SecF subfamily. Forms a complex with SecD. Part of the essential Sec protein translocation apparatus which comprises SecA, SecYEG and auxiliary proteins SecDF. Other proteins may also be involved.

The protein resides in the cell inner membrane. Functionally, part of the Sec protein translocase complex. Interacts with the SecYEG preprotein conducting channel. SecDF uses the proton motive force (PMF) to complete protein translocation after the ATP-dependent function of SecA. The polypeptide is Protein translocase subunit SecF (Borreliella burgdorferi (strain ATCC 35210 / DSM 4680 / CIP 102532 / B31) (Borrelia burgdorferi)).